A 326-amino-acid polypeptide reads, in one-letter code: Putative ribose-phosphate pyrophosphokinase 2 (326 aa).

Residues aspartate 43–glutamate 45 and arginine 102–glutamine 103 contribute to the ATP site. Position 136 (histidine 136) interacts with Mg(2+). Residues aspartate 226 and asparagine 230–threonine 234 contribute to the D-ribose 5-phosphate site.

It belongs to the ribose-phosphate pyrophosphokinase family. Class I subfamily. Homohexamer. Mg(2+) serves as cofactor.

It is found in the cytoplasm. The enzyme catalyses D-ribose 5-phosphate + ATP = 5-phospho-alpha-D-ribose 1-diphosphate + AMP + H(+). Its pathway is metabolic intermediate biosynthesis; 5-phospho-alpha-D-ribose 1-diphosphate biosynthesis; 5-phospho-alpha-D-ribose 1-diphosphate from D-ribose 5-phosphate (route I): step 1/1. Involved in the biosynthesis of the central metabolite phospho-alpha-D-ribosyl-1-pyrophosphate (PRPP) via the transfer of pyrophosphoryl group from ATP to 1-hydroxyl of ribose-5-phosphate (Rib-5-P). In Streptococcus mutans serotype c (strain ATCC 700610 / UA159), this protein is Putative ribose-phosphate pyrophosphokinase 2.